Reading from the N-terminus, the 347-residue chain is SCA7 domain-containing protein SELMODRAFT_439258 (347 aa).

Positions 1–13 (MCFFLSSLCPVVA) are cleaved as a signal peptide. A disordered region spans residues 77 to 106 (RAEVGGTGPKVGRPRKLSVYNPREMSDGNP). In terms of domain architecture, SCA7 spans 134–201 (QHLPFTVDDL…NNSRKSQQAD (68 aa)).

The chain is SCA7 domain-containing protein SELMODRAFT_439258 from Selaginella moellendorffii (Spikemoss).